A 328-amino-acid polypeptide reads, in one-letter code: Transcription initiation factor TFIID subunit 8 (328 aa).

The 68-residue stretch at 16–83 folds into the Histone-fold domain; that stretch reads RRILNKVVSQ…DVSLALINMG (68 aa). The disordered stretch occupies residues 229–309; it reads NRTEDEPSKD…PGTMPSRSLA (81 aa). 3 positions are modified to phosphoserine: S236, S245, and S255. Over residues 239–251 the composition is skewed to acidic residues; the sequence is DGEEGDSENEEMD. Basic and acidic residues predominate over residues 252-264; that stretch reads GDKSKEEKPELDI. Over residues 296-309 the composition is skewed to polar residues; sequence NCPTPGTMPSRSLA.

Belongs to the TAF8 family. As to quaternary structure, belongs to the TFIID complex which is composed of TATA binding protein (Tbp) and a number of TBP-associated factors (TAFs). Histone fold interacts with N-terminus of Taf10b.

It is found in the nucleus. Its function is as follows. TFIID is a multimeric protein complex that plays a central role in mediating promoter responses to various activators and repressors. The sequence is that of Transcription initiation factor TFIID subunit 8 from Drosophila melanogaster (Fruit fly).